The primary structure comprises 161 residues: Cell division protein SepF (161 aa).

This sequence belongs to the SepF family. As to quaternary structure, homodimer. Interacts with FtsZ.

Its subcellular location is the cytoplasm. Functionally, cell division protein that is part of the divisome complex and is recruited early to the Z-ring. Probably stimulates Z-ring formation, perhaps through the cross-linking of FtsZ protofilaments. Its function overlaps with FtsA. This is Cell division protein SepF from Finegoldia magna (strain ATCC 29328 / DSM 20472 / WAL 2508) (Peptostreptococcus magnus).